The sequence spans 94 residues: Small ribosomal subunit protein bS18 (94 aa).

This sequence belongs to the bacterial ribosomal protein bS18 family. In terms of assembly, part of the 30S ribosomal subunit. Forms a tight heterodimer with protein bS6.

In terms of biological role, binds as a heterodimer with protein bS6 to the central domain of the 16S rRNA, where it helps stabilize the platform of the 30S subunit. This chain is Small ribosomal subunit protein bS18, found in Polaromonas naphthalenivorans (strain CJ2).